Consider the following 579-residue polypeptide: Protein alan shepard (579 aa).

Residues 1–12 are compositionally biased toward pro residues; it reads MHPRYSPAPPPQ. Positions 1 to 66 are disordered; it reads MHPRYSPAPP…GSSSSAAAAP (66 aa). At Tyr-5 the chain carries Phosphotyrosine. Residues 13-24 are compositionally biased toward low complexity; the sequence is QQQQMGGPPHQQ. Gly residues predominate over residues 25–35; sequence QGGGGGGGGSM. Positions 37–54 are enriched in polar residues; the sequence is GPSNAQQLPPQIPRSQNY. Residues 55 to 66 are compositionally biased toward low complexity; it reads SNGSSSSAAAAP. Phosphotyrosine is present on residues Tyr-125 and Tyr-142. Positions 164–225 are disordered; sequence PATTTYGQRV…TVQNQNQQGG (62 aa). Over residues 178–225 the composition is skewed to low complexity; the sequence is SPSNTNSSSSSNTGSQSGTLSTSLSNTTNTNTNMGPNGTVQNQNQQGG. RRM domains follow at residues 231–304 and 310–389; these read TNLY…MAKQ and TNLY…FADG. The tract at residues 553–579 is disordered; the sequence is MTDSEQASTAASPDEAYTQYPHQAAPK.

In terms of biological role, has a role in the perception of gravity. The protein is Protein alan shepard of Drosophila sechellia (Fruit fly).